Here is a 195-residue protein sequence, read N- to C-terminus: Flagellar transcriptional regulator FlhC (195 aa).

Residues C137, C140, C157, and C160 each coordinate Zn(2+). A disordered region spans residues 165–195 (RAGSARRKTTTRKAVAPTHKTTAASRKAVVA).

It belongs to the FlhC family. As to quaternary structure, heterohexamer composed of two FlhC and four FlhD subunits. Each FlhC binds a FlhD dimer, forming a heterotrimer, and a hexamer assembles by dimerization of two heterotrimers. Requires Zn(2+) as cofactor.

Its subcellular location is the cytoplasm. Its function is as follows. Functions in complex with FlhD as a master transcriptional regulator that regulates transcription of several flagellar and non-flagellar operons by binding to their promoter region. Activates expression of class 2 flagellar genes, including fliA, which is a flagellum-specific sigma factor that turns on the class 3 genes. Also regulates genes whose products function in a variety of physiological pathways. The chain is Flagellar transcriptional regulator FlhC from Thauera aminoaromatica.